Reading from the N-terminus, the 67-residue chain is MKLLLLTLTVLLLLSQLTPGGTQRCWNLYGKCRHRCSKKERVYVYCLNNKMCCVKPKYQPKEKWWPF.

The N-terminal stretch at 1-20 (MKLLLLTLTVLLLLSQLTPG) is a signal peptide. Disulfide bonds link C25/C52, C32/C46, and C36/C53.

The protein belongs to the beta-defensin family. In terms of tissue distribution, abundant expression in the male reproductive tract only. Expressed abundantly in testis, while expression in epididymis decreased gradually from caput to cauda.

It is found in the secreted. Its function is as follows. Has antibacterial activity. The chain is Beta-defensin 123 (DEFB123) from Macaca mulatta (Rhesus macaque).